The chain runs to 471 residues: ATP synthase subunit beta (471 aa).

153–160 serves as a coordination point for ATP; the sequence is GGAGVGKT.

The protein belongs to the ATPase alpha/beta chains family. As to quaternary structure, F-type ATPases have 2 components, CF(1) - the catalytic core - and CF(0) - the membrane proton channel. CF(1) has five subunits: alpha(3), beta(3), gamma(1), delta(1), epsilon(1). CF(0) has three main subunits: a(1), b(2) and c(9-12). The alpha and beta chains form an alternating ring which encloses part of the gamma chain. CF(1) is attached to CF(0) by a central stalk formed by the gamma and epsilon chains, while a peripheral stalk is formed by the delta and b chains.

The protein resides in the cell inner membrane. It catalyses the reaction ATP + H2O + 4 H(+)(in) = ADP + phosphate + 5 H(+)(out). Functionally, produces ATP from ADP in the presence of a proton gradient across the membrane. The catalytic sites are hosted primarily by the beta subunits. The chain is ATP synthase subunit beta from Verminephrobacter eiseniae (strain EF01-2).